The following is a 291-amino-acid chain: Glucose and ribitol dehydrogenase (291 aa).

A disordered region spans residues 1–35 (MASGGQFPPQKQESQPGKEHLMDPSPQHASPHYKP). 45–69 (LVTGGDSGIGRSVCYHFALEGATVA) contributes to the NAD(+) binding site. Serine 183 lines the substrate pocket. Catalysis depends on tyrosine 196, which acts as the Proton acceptor.

It belongs to the short-chain dehydrogenases/reductases (SDR) family. In terms of tissue distribution, expressed in embryogenic cells, somatic embryos and seeds in the later stages of development, but not in non-embryogenic cells and mature leaves.

Functionally, may act as a short alcohol-polyol-sugar dehydrogenase possibly related to carbohydrate metabolism and the acquisition of desiccation tolerance. May also be involved in signal transduction. The sequence is that of Glucose and ribitol dehydrogenase (CAISE5) from Daucus carota (Wild carrot).